Reading from the N-terminus, the 807-residue chain is Maternal DNA replication licensing factor mcm3 (807 aa).

One can recognise an MCM domain in the interval 295-502; sequence IFEHLSKSLA…NDQEIADHVL (208 aa). 345-352 is an ATP binding site; the sequence is GDPSVAKS. Positions 477 to 480 match the Arginine finger motif; that stretch reads SRFD. Positions 664 to 673 are enriched in basic and acidic residues; the sequence is KTDKDLHDEN. The tract at residues 664–741 is disordered; it reads KTDKDLHDEN…QDGKRSLSQN (78 aa). Residues 707 to 723 show a composition bias toward polar residues; the sequence is FSEQDSSLNENLSQSLR. The segment covering 727–741 has biased composition (basic and acidic residues); the sequence is KKAESQDGKRSLSQN.

The protein belongs to the MCM family. Component of the mcm2-7 complex (RLF-M). The complex forms a toroidal hexameric ring with the proposed subunit order mcm2-mcm6-mcm4-mcm7-mcm3-mcm5. The heterodimer of mmcm3/mcm5 interacts with mcm4, mmcm6, mcm7 and weakly with mcm2. Interacts with mcm7, though this interaction may not be direct, and remains in a complex with mcm7 throughout the cell cycle. Component of the CMG helicase complex, composed of the mcm2-7 complex, the GINS complex and cdc45.

It localises to the nucleus. It is found in the chromosome. It carries out the reaction ATP + H2O = ADP + phosphate + H(+). Acts as a component of the mcm2-7 complex (mcm complex) which is the putative replicative helicase essential for 'once per cell cycle' DNA replication initiation and elongation in eukaryotic cells. The active ATPase sites in the mcm2-7 ring are formed through the interaction surfaces of two neighboring subunits such that a critical structure of a conserved arginine finger motif is provided in trans relative to the ATP-binding site of the Walker A box of the adjacent subunit. The six ATPase active sites, however, are likely to contribute differentially to the complex helicase activity. The existence of maternal and zygotic forms of mcm3 and mcm6 suggests that specific forms of mcm2-7 complexes may be used during different stages of development. This chain is Maternal DNA replication licensing factor mcm3 (mmcm3), found in Xenopus laevis (African clawed frog).